The following is a 264-amino-acid chain: tRNA (guanine-N(1)-)-methyltransferase (264 aa).

S-adenosyl-L-methionine-binding positions include Gly-125 and 145 to 150 (LGDFVL).

This sequence belongs to the RNA methyltransferase TrmD family. Homodimer.

The protein localises to the cytoplasm. The catalysed reaction is guanosine(37) in tRNA + S-adenosyl-L-methionine = N(1)-methylguanosine(37) in tRNA + S-adenosyl-L-homocysteine + H(+). Functionally, specifically methylates guanosine-37 in various tRNAs. This is tRNA (guanine-N(1)-)-methyltransferase from Burkholderia multivorans (strain ATCC 17616 / 249).